The following is a 398-amino-acid chain: MAAGAGARPAPRWVKALGEPLSAAQLRRLEEHRYTAVGESLFEPPLQLYWTWLLQWIPLWMAPNTITLIGLAINLVTTLVLIFYCPTVTEEAPYWTYLLCALGLFIYQSLDAIDGKQARRTNSCSPLGELFDHGCDSLSTVFMAIGASIAVRLGTHPDWLFFCSFVGMFMFYCAHWQTYVSGVLRFGRVDVTEIQVALVIVFMLSTFGGATMWDYTIPILEIKLKIVPVLGVVGGLIFSCSNYFHVILHGGVGKNGSTIAGTSVLSPGLHIGLIIILAIMIYKKSATNMFEKHPCLYTLMFGCVFAKVAQKLVIAHMTKSELYLQDTVFIGPGLLFLDQYFNNFIDEYVVLWIAMVISSFDMMIYFTSLCLQISRHLHLNIFKTSCQQAPEQVYKHID.

Position 2 is an N-acetylalanine (alanine 2). At 2 to 62 the chain is on the cytoplasmic side; that stretch reads AAGAGARPAP…LLQWIPLWMA (61 aa). Residues 63–83 traverse the membrane as a helical segment; sequence PNTITLIGLAINLVTTLVLIF. Asparagine 64 provides a ligand contact to CDP-choline. Over 84–93 the chain is Lumenal; it reads YCPTVTEEAP. The helical transmembrane segment at 94-118 threads the bilayer; sequence YWTYLLCALGLFIYQSLDAIDGKQA. Mg(2+)-binding residues include aspartate 111 and aspartate 114. Position 119 (arginine 119) interacts with CDP-choline. Residues 119 to 125 lie on the Cytoplasmic side of the membrane; that stretch reads RRTNSCS. Residues 126 to 150 form a helical membrane-spanning segment; it reads PLGELFDHGCDSLSTVFMAIGASIA. Mg(2+) is bound at residue aspartate 132. Histidine 133 (proton acceptor) is an active-site residue. Residue aspartate 136 participates in Mg(2+) binding. The Lumenal segment spans residues 151–160; sequence VRLGTHPDWL. A helical membrane pass occupies residues 161–179; it reads FFCSFVGMFMFYCAHWQTY. Residues 180–190 lie on the Cytoplasmic side of the membrane; sequence VSGVLRFGRVD. Residues 191–207 traverse the membrane as a helical segment; it reads VTEIQVALVIVFMLSTF. The Lumenal portion of the chain corresponds to 208 to 222; it reads GGATMWDYTIPILEI. A helical membrane pass occupies residues 223 to 248; the sequence is KLKIVPVLGVVGGLIFSCSNYFHVIL. Topologically, residues 249–265 are cytoplasmic; it reads HGGVGKNGSTIAGTSVL. Residues 266–281 traverse the membrane as a helical segment; the sequence is SPGLHIGLIIILAIMI. The Lumenal portion of the chain corresponds to 282-293; the sequence is YKKSATNMFEKH. Residues 294-316 form a helical membrane-spanning segment; it reads PCLYTLMFGCVFAKVAQKLVIAH. Residues 317 to 329 are Cytoplasmic-facing; that stretch reads MTKSELYLQDTVF. Residues 330-339 traverse the membrane as a helical segment; that stretch reads IGPGLLFLDQ. Over 340-346 the chain is Lumenal; the sequence is YFNNFID. Residues 347 to 376 form a helical membrane-spanning segment; it reads EYVVLWIAMVISSFDMMIYFTSLCLQISRH. The Cytoplasmic segment spans residues 377 to 398; it reads LHLNIFKTSCQQAPEQVYKHID.

This sequence belongs to the CDP-alcohol phosphatidyltransferase class-I family. Mg(2+) serves as cofactor. Mn(2+) is required as a cofactor. In terms of tissue distribution, expressed in brain, heart, lung, liver, spleen, intestine and muscle. Down-regulated in kidney of type 2 diabetic KK/Ta mice.

Its subcellular location is the golgi apparatus membrane. The catalysed reaction is CDP-choline + a 1,2-diacyl-sn-glycerol = a 1,2-diacyl-sn-glycero-3-phosphocholine + CMP + H(+). It catalyses the reaction 1-octadecanoyl-2-(5Z,8Z,11Z,14Z-eicosatetraenoyl)-sn-glycerol + CDP-choline = 1-octadecanoyl-2-(5Z,8Z,11Z,14Z-eicosatetraenoyl)-sn-glycero-3-phosphocholine + CMP + H(+). It carries out the reaction 1-hexadecanoyl-2-(9Z-octadecenoyl)-sn-glycerol + CDP-choline = 1-hexadecanoyl-2-(9Z-octadecenoyl)-sn-glycero-3-phosphocholine + CMP + H(+). The enzyme catalyses 1-hexadecanoyl-2-(4Z,7Z,10Z,13Z,16Z,19Z-docosahexaenoyl)-sn-glycerol + CDP-choline = 1-hexadecanoyl-2-(4Z,7Z,10Z,13Z,16Z,19Z-docosahexaenoyl)-sn-glycero-3-phosphocholine + CMP + H(+). The catalysed reaction is 1,2-dioctanoyl-sn-glycerol + CDP-choline = 1,2-dioctanoyl-sn-glycero-3-phosphocholine + CMP + H(+). It functions in the pathway phospholipid metabolism; phosphatidylcholine biosynthesis; phosphatidylcholine from phosphocholine: step 2/2. Catalyzes the final step of de novo phosphatidylcholine (PC) synthesis, i.e. the transfer of choline phosphate from CDP-choline to the free hydroxyl of a diacylglycerol (DAG), producing a PC. It thereby plays a central role in the formation and maintenance of vesicular membranes. The sequence is that of Cholinephosphotransferase 1 from Mus musculus (Mouse).